Here is a 207-residue protein sequence, read N- to C-terminus: Urease accessory protein UreG (207 aa).

Residue 14–21 (GPVGSGKT) coordinates GTP.

This sequence belongs to the SIMIBI class G3E GTPase family. UreG subfamily. As to quaternary structure, homodimer. UreD, UreF and UreG form a complex that acts as a GTP-hydrolysis-dependent molecular chaperone, activating the urease apoprotein by helping to assemble the nickel containing metallocenter of UreC. The UreE protein probably delivers the nickel.

The protein resides in the cytoplasm. In terms of biological role, facilitates the functional incorporation of the urease nickel metallocenter. This process requires GTP hydrolysis, probably effectuated by UreG. This Rhodopseudomonas palustris (strain BisB18) protein is Urease accessory protein UreG.